We begin with the raw amino-acid sequence, 89 residues long: UPF0237 protein CA_C0478 (89 aa).

An ACT domain is found at 4-78 (IITVIGKDKV…KKLGVSIKIQ (75 aa)).

This sequence belongs to the UPF0237 family.

In Clostridium acetobutylicum (strain ATCC 824 / DSM 792 / JCM 1419 / IAM 19013 / LMG 5710 / NBRC 13948 / NRRL B-527 / VKM B-1787 / 2291 / W), this protein is UPF0237 protein CA_C0478.